Reading from the N-terminus, the 259-residue chain is MNDILKIGKYELNSRLIVGSGKYKDFQTTKEATLASGSELITVAIRRVNITNPNEENLLDYFKDTNVKFLPNSAGCFTAEEAITTFRLMREATGIDLIKLEVIGDAQKTLYPDVIETIKACEILKKDGFTIMAYTSDDPIIAKRLEDAGADAIMPLAAPIGSGLGIQNKYNIAFIRDAVKVPVIVDAGIGCASDASIAMELGADAVLANSAIACAQNPIQMAEAMKYAVIAGRLGYKAGRIPKKPYATASSPIDGLIQF.

The active-site Schiff-base intermediate with DXP is the K99. 1-deoxy-D-xylulose 5-phosphate contacts are provided by residues G161, 187–188, and 209–219; these read AG and NSAIACAQNPI.

The protein belongs to the ThiG family. In terms of assembly, homotetramer. Forms heterodimers with either ThiH or ThiS.

The protein resides in the cytoplasm. It catalyses the reaction [ThiS sulfur-carrier protein]-C-terminal-Gly-aminoethanethioate + 2-iminoacetate + 1-deoxy-D-xylulose 5-phosphate = [ThiS sulfur-carrier protein]-C-terminal Gly-Gly + 2-[(2R,5Z)-2-carboxy-4-methylthiazol-5(2H)-ylidene]ethyl phosphate + 2 H2O + H(+). Its pathway is cofactor biosynthesis; thiamine diphosphate biosynthesis. Catalyzes the rearrangement of 1-deoxy-D-xylulose 5-phosphate (DXP) to produce the thiazole phosphate moiety of thiamine. Sulfur is provided by the thiocarboxylate moiety of the carrier protein ThiS. In vitro, sulfur can be provided by H(2)S. The sequence is that of Thiazole synthase from Aliarcobacter butzleri (strain RM4018) (Arcobacter butzleri).